We begin with the raw amino-acid sequence, 545 residues long: Calcium-binding mitochondrial carrier SAL1 (545 aa).

In terms of domain architecture, EF-hand 1 spans 11 to 46 (QRDIRYACLFKELDVKGNGQVTLDNLISAFEKNDHP). Residues K65, D70, D93, D95, D97, K99, and E104 each contribute to the Ca(2+) site. 3 EF-hand domains span residues 80–115 (NAES…LDNQ), 120–155 (NELN…RGQA), and 156–191 (SHKK…VPRK). T161 and S166 together coordinate Ca(2+). 3 Solcar repeats span residues 225-332 (IRGF…TKKI), 345-434 (LSKF…LKKW), and 452-541 (LSNL…LKKF). The next 6 helical transmembrane spans lie at 231 to 248 (FIAG…TAPF), 307 to 326 (GNGL…FGSF), 355 to 368 (GLAG…VYPI), 409 to 428 (GVTV…LGTF), 458 to 475 (LPMG…VYPI), and 516 to 535 (GLVP…YLCY).

The protein belongs to the mitochondrial carrier (TC 2.A.29) family.

The protein resides in the mitochondrion inner membrane. In terms of biological role, calcium-dependent mitochondrial solute carrier. This chain is Calcium-binding mitochondrial carrier SAL1 (SAL1), found in Saccharomyces cerevisiae (Baker's yeast).